A 432-amino-acid chain; its full sequence is GTPase Obg (432 aa).

The region spanning 1 to 158 is the Obg domain; it reads MFVDQIKIEV…RKLKLELKVL (158 aa). An OBG-type G domain is found at 159–335; the sequence is ADVGLVGFPS…LTHRTADVLE (177 aa). Residues 165–172, 190–194, 212–215, 282–285, and 316–318 contribute to the GTP site; these read GFPSVGKS, FTTLV, DLPG, SKMD, and SSL. Mg(2+)-binding residues include serine 172 and threonine 192. Residues 354–432 enclose the OCT domain; the sequence is TFKEDEPAFK…IEDFTFEFVE (79 aa).

It belongs to the TRAFAC class OBG-HflX-like GTPase superfamily. OBG GTPase family. Monomer. The cofactor is Mg(2+).

The protein localises to the cytoplasm. Functionally, an essential GTPase which binds GTP, GDP and possibly (p)ppGpp with moderate affinity, with high nucleotide exchange rates and a fairly low GTP hydrolysis rate. Plays a role in control of the cell cycle, stress response, ribosome biogenesis and in those bacteria that undergo differentiation, in morphogenesis control. The chain is GTPase Obg from Ligilactobacillus salivarius (strain UCC118) (Lactobacillus salivarius).